The primary structure comprises 321 residues: tRNA-dihydrouridine synthase B (321 aa).

FMN contacts are provided by residues 16–18 and Gln70; that span reads PMA. Cys100 (proton donor) is an active-site residue. Residues Lys139, 200 to 202, and 224 to 225 each bind FMN; these read NGD and GR.

It belongs to the Dus family. DusB subfamily. Requires FMN as cofactor.

The enzyme catalyses a 5,6-dihydrouridine in tRNA + NAD(+) = a uridine in tRNA + NADH + H(+). It carries out the reaction a 5,6-dihydrouridine in tRNA + NADP(+) = a uridine in tRNA + NADPH + H(+). Its function is as follows. Catalyzes the synthesis of 5,6-dihydrouridine (D), a modified base found in the D-loop of most tRNAs, via the reduction of the C5-C6 double bond in target uridines. The protein is tRNA-dihydrouridine synthase B of Salmonella typhi.